The sequence spans 200 residues: Holliday junction branch migration complex subunit RuvA (200 aa).

The segment at 1-63 (MIASVRGVVT…EDSLTLYGFA (63 aa)) is domain I. Positions 64 to 142 (DDDAKALFEL…PVPVGADSAA (79 aa)) are domain II. The segment at 143–151 (GVTTGAWPE) is flexible linker. Residues 151 to 200 (EQVRQALVGLGWTAAQADQAVTAVAETVDGAVPPVPVLLRQAIRLLGRTR) form a domain III region.

This sequence belongs to the RuvA family. Homotetramer. Forms an RuvA(8)-RuvB(12)-Holliday junction (HJ) complex. HJ DNA is sandwiched between 2 RuvA tetramers; dsDNA enters through RuvA and exits via RuvB. An RuvB hexamer assembles on each DNA strand where it exits the tetramer. Each RuvB hexamer is contacted by two RuvA subunits (via domain III) on 2 adjacent RuvB subunits; this complex drives branch migration. In the full resolvosome a probable DNA-RuvA(4)-RuvB(12)-RuvC(2) complex forms which resolves the HJ.

Its subcellular location is the cytoplasm. Its function is as follows. The RuvA-RuvB-RuvC complex processes Holliday junction (HJ) DNA during genetic recombination and DNA repair, while the RuvA-RuvB complex plays an important role in the rescue of blocked DNA replication forks via replication fork reversal (RFR). RuvA specifically binds to HJ cruciform DNA, conferring on it an open structure. The RuvB hexamer acts as an ATP-dependent pump, pulling dsDNA into and through the RuvAB complex. HJ branch migration allows RuvC to scan DNA until it finds its consensus sequence, where it cleaves and resolves the cruciform DNA. In Salinispora tropica (strain ATCC BAA-916 / DSM 44818 / JCM 13857 / NBRC 105044 / CNB-440), this protein is Holliday junction branch migration complex subunit RuvA.